Here is a 714-residue protein sequence, read N- to C-terminus: Fatty acid oxidation complex subunit alpha (714 aa).

Residues 1–190 (MEMASAFTLN…KLGLVDDVVP (190 aa)) are enoyl-CoA hydratase. The interval 306–714 (APLNSVGILG…FWKTTATDLQ (409 aa)) is 3-hydroxyacyl-CoA dehydrogenase.

It in the N-terminal section; belongs to the enoyl-CoA hydratase/isomerase family. This sequence in the central section; belongs to the 3-hydroxyacyl-CoA dehydrogenase family. As to quaternary structure, heterotetramer of two alpha chains (FadJ) and two beta chains (FadI).

Its subcellular location is the cytoplasm. The catalysed reaction is a (3S)-3-hydroxyacyl-CoA = a (2E)-enoyl-CoA + H2O. It catalyses the reaction a 4-saturated-(3S)-3-hydroxyacyl-CoA = a (3E)-enoyl-CoA + H2O. The enzyme catalyses a (3S)-3-hydroxyacyl-CoA + NAD(+) = a 3-oxoacyl-CoA + NADH + H(+). It carries out the reaction (3S)-3-hydroxybutanoyl-CoA = (3R)-3-hydroxybutanoyl-CoA. Its pathway is lipid metabolism; fatty acid beta-oxidation. Its function is as follows. Catalyzes the formation of a hydroxyacyl-CoA by addition of water on enoyl-CoA. Also exhibits 3-hydroxyacyl-CoA epimerase and 3-hydroxyacyl-CoA dehydrogenase activities. This Escherichia coli O6:K15:H31 (strain 536 / UPEC) protein is Fatty acid oxidation complex subunit alpha.